The following is a 320-amino-acid chain: o-succinylbenzoate synthase (320 aa).

K133 functions as the Proton donor in the catalytic mechanism. Residues D161, E190, and D213 each contribute to the Mg(2+) site. The active-site Proton acceptor is K235.

The protein belongs to the mandelate racemase/muconate lactonizing enzyme family. MenC type 1 subfamily. A divalent metal cation serves as cofactor.

It catalyses the reaction (1R,6R)-6-hydroxy-2-succinyl-cyclohexa-2,4-diene-1-carboxylate = 2-succinylbenzoate + H2O. Its pathway is quinol/quinone metabolism; 1,4-dihydroxy-2-naphthoate biosynthesis; 1,4-dihydroxy-2-naphthoate from chorismate: step 4/7. It participates in quinol/quinone metabolism; menaquinone biosynthesis. Functionally, converts 2-succinyl-6-hydroxy-2,4-cyclohexadiene-1-carboxylate (SHCHC) to 2-succinylbenzoate (OSB). The chain is o-succinylbenzoate synthase from Escherichia coli O127:H6 (strain E2348/69 / EPEC).